A 345-amino-acid chain; its full sequence is Holliday junction branch migration complex subunit RuvB (345 aa).

A large ATPase domain (RuvB-L) region spans residues 1–186; sequence MSTDPDEREV…FGFTAHMDFY (186 aa). Residues L25, R26, G67, K70, T71, S72, 133–135, R176, Y186, and R223 each bind ATP; that span reads EDF. T71 contacts Mg(2+). The small ATPAse domain (RuvB-S) stretch occupies residues 187–257; sequence EPAELERVLV…VAKAALAVYD (71 aa). The head domain (RuvB-H) stretch occupies residues 260 to 345; it reads ELGLDRLDRA…AGANQPGLFE (86 aa). DNA is bound by residues R315 and R320.

The protein belongs to the RuvB family. In terms of assembly, homohexamer. Forms an RuvA(8)-RuvB(12)-Holliday junction (HJ) complex. HJ DNA is sandwiched between 2 RuvA tetramers; dsDNA enters through RuvA and exits via RuvB. An RuvB hexamer assembles on each DNA strand where it exits the tetramer. Each RuvB hexamer is contacted by two RuvA subunits (via domain III) on 2 adjacent RuvB subunits; this complex drives branch migration. In the full resolvosome a probable DNA-RuvA(4)-RuvB(12)-RuvC(2) complex forms which resolves the HJ.

The protein localises to the cytoplasm. It catalyses the reaction ATP + H2O = ADP + phosphate + H(+). Its function is as follows. The RuvA-RuvB-RuvC complex processes Holliday junction (HJ) DNA during genetic recombination and DNA repair, while the RuvA-RuvB complex plays an important role in the rescue of blocked DNA replication forks via replication fork reversal (RFR). RuvA specifically binds to HJ cruciform DNA, conferring on it an open structure. The RuvB hexamer acts as an ATP-dependent pump, pulling dsDNA into and through the RuvAB complex. RuvB forms 2 homohexamers on either side of HJ DNA bound by 1 or 2 RuvA tetramers; 4 subunits per hexamer contact DNA at a time. Coordinated motions by a converter formed by DNA-disengaged RuvB subunits stimulates ATP hydrolysis and nucleotide exchange. Immobilization of the converter enables RuvB to convert the ATP-contained energy into a lever motion, pulling 2 nucleotides of DNA out of the RuvA tetramer per ATP hydrolyzed, thus driving DNA branch migration. The RuvB motors rotate together with the DNA substrate, which together with the progressing nucleotide cycle form the mechanistic basis for DNA recombination by continuous HJ branch migration. Branch migration allows RuvC to scan DNA until it finds its consensus sequence, where it cleaves and resolves cruciform DNA. The polypeptide is Holliday junction branch migration complex subunit RuvB (Mycobacterium ulcerans (strain Agy99)).